A 330-amino-acid chain; its full sequence is MKKTFILQQQEISFVKNTFTQNLIEQLGIIEVQGPILSQVGNGMQDNLSGIEKAVQVNVKCIPNAVFEVVHSLAKWKRHTLARFNFKEDEGLFVHMKALRPDEDSLDPTHSVYVDQWDWEKVIPEGRRNFAYLKETVNSIYRAIRLTELAVEARFDIPSILPKQITFVHSEDLVKRYPDLSSKERENAICKEYGAVFLIGIGGKLSDGKPHDGRAPDYDDWTTESENGYKGLNGDILVWNDQLGKAFELSSMGIRVDQSALRLQAGLTGDEDRLKMDWHQDLLNGKLPLTIGGGIGQSRLAMLLLRKKHIGEVQSSVWPKEMLEEFSNIL.

Belongs to the class-II aminoacyl-tRNA synthetase family. AsnA subfamily.

Its subcellular location is the cytoplasm. The catalysed reaction is L-aspartate + NH4(+) + ATP = L-asparagine + AMP + diphosphate + H(+). Its pathway is amino-acid biosynthesis; L-asparagine biosynthesis; L-asparagine from L-aspartate (ammonia route): step 1/1. The polypeptide is Aspartate--ammonia ligase (Haemophilus influenzae (strain PittEE)).